Consider the following 62-residue polypeptide: Zinc metalloproteinase-disintegrin-like BaG (62 aa).

The Peptidase M12B domain occupies 24–54 (KTDLLNRSHDNAQLSPINLVVAVIMAHEMGH). N-linked (GlcNAc...) asparagine glycosylation is present at Asn29. A Zn(2+)-binding site is contributed by His50. Residue Glu51 is part of the active site. His54 provides a ligand contact to Zn(2+).

It belongs to the venom metalloproteinase (M12B) family. P-III subfamily. P-IIIc sub-subfamily. As to quaternary structure, dimer. Requires Zn(2+) as cofactor. Post-translationally, the N-terminus is blocked. Expressed by the venom gland.

The protein resides in the secreted. With respect to regulation, inhibited by EDTA, and 1,10-phenanthroline. Snake venom Zinc metalloproteinase that inhibits ADP-induced platelet aggregation and inhibits the alpha-5/beta-1 (ITGA5/ITGB1) integrin, a fibronectin receptor. Has caseinolytic activity. Induces the detachment of cells that are bound to fibronectin. The sequence is that of Zinc metalloproteinase-disintegrin-like BaG from Bothrops alternatus (Urutu).